The following is a 398-amino-acid chain: Lysophosphatidylserine lipase ABHD12 (398 aa).

Basic and acidic residues predominate over residues 1-16; it reads MRKRTEPVALEHERRT. The segment at 1–24 is disordered; sequence MRKRTEPVALEHERRTASGSPSAG. Residues 1–74 lie on the Cytoplasmic side of the membrane; sequence MRKRTEPVAL…RKGLCFRLRK (74 aa). Residues 75 to 95 traverse the membrane as a helical segment; the sequence is ILFFVLGLYVAIPFLIKLCPG. Residues 96 to 398 lie on the Extracellular side of the membrane; it reads IQAKLIFLNF…LGKSEPGRQH (303 aa). Asparagine 123 is a glycosylation site (N-linked (GlcNAc...) asparagine). Residue serine 246 is the Nucleophile of the active site. Residues aspartate 333 and histidine 372 each act as charge relay system in the active site.

The protein belongs to the serine esterase family.

It is found in the endoplasmic reticulum membrane. The enzyme catalyses 1-(9Z-octadecenoyl)-sn-glycero-3-phospho-L-serine + H2O = sn-glycero-3-phospho-L-serine + (9Z)-octadecenoate + H(+). The catalysed reaction is 1-(9Z-octadecenoyl)-sn-glycero-3-phospho-(1'-sn-glycerol) + H2O = sn-glycero-3-phospho-(1'-sn-glycerol) + (9Z)-octadecenoate + H(+). It catalyses the reaction 1-(9Z-octadecenoyl)-sn-glycero-3-phospho-(1D-myo-inositol) + H2O = sn-glycero-3-phospho-1D-myo-inositol + (9Z)-octadecenoate + H(+). It carries out the reaction 1-(9Z-octadecenoyl)-sn-glycero-3-phosphoethanolamine + H2O = sn-glycero-3-phosphoethanolamine + (9Z)-octadecenoate + H(+). The enzyme catalyses 1-(9Z-octadecenoyl)-sn-glycero-3-phosphocholine + H2O = 1-(9Z-octadecenoyl)-sn-glycerol + phosphocholine + H(+). The catalysed reaction is 2-(9Z-octadecenoyl)-glycerol + H2O = glycerol + (9Z)-octadecenoate + H(+). It catalyses the reaction 1-hexadecanoyl-sn-glycero-3-phospho-L-serine + H2O = sn-glycero-3-phospho-L-serine + hexadecanoate + H(+). It carries out the reaction 2-(5Z,8Z,11Z,14Z-eicosatetraenoyl)-glycerol + H2O = glycerol + (5Z,8Z,11Z,14Z)-eicosatetraenoate + H(+). The enzyme catalyses Hydrolyzes glycerol monoesters of long-chain fatty acids.. The catalysed reaction is 1-decanoylglycerol + H2O = decanoate + glycerol + H(+). It catalyses the reaction 1-dodecanoylglycerol + H2O = dodecanoate + glycerol + H(+). It carries out the reaction 1-tetradecanoylglycerol + H2O = tetradecanoate + glycerol + H(+). The enzyme catalyses 2-hexadecanoylglycerol + H2O = glycerol + hexadecanoate + H(+). The catalysed reaction is 1-(9Z-octadecenoyl)-glycerol + H2O = glycerol + (9Z)-octadecenoate + H(+). It catalyses the reaction 2-(9Z,12Z-octadecadienoyl)-glycerol + H2O = (9Z,12Z)-octadecadienoate + glycerol + H(+). It carries out the reaction 1-(5Z,8Z,11Z,14Z-eicosatetraenoyl)-glycerol + H2O = glycerol + (5Z,8Z,11Z,14Z)-eicosatetraenoate + H(+). The enzyme catalyses 1-(9Z,12Z-octadecadienoyl)-glycerol + H2O = (9Z,12Z)-octadecadienoate + glycerol + H(+). The catalysed reaction is 1-hexadecanoylglycerol + H2O = glycerol + hexadecanoate + H(+). It catalyses the reaction 1-octadecanoylglycerol + H2O = octadecanoate + glycerol + H(+). It carries out the reaction 1-octadecanoyl-2-(9,10-epoxyoctadecanoyl)-sn-glycero-3-phospho-L-serine + H2O = 9,10-epoxyoctadecanoate + 1-octadecanoyl-sn-glycero-3-phosphoserine + H(+). The enzyme catalyses 1-octadecanoyl-2-(10-hydroxyoctadecanoyl)-sn-glycero-3-phospho-L-serine + H2O = 1-octadecanoyl-sn-glycero-3-phosphoserine + 10-hydroxyoctadecanoate + H(+). The catalysed reaction is 1-hexadecanoyl-2-(10-hydroxyoctadecanoyl)-sn-glycero-3-phospho-L-serine + H2O = 10-hydroxyoctadecanoate + 1-hexadecanoyl-sn-glycero-3-phospho-L-serine + H(+). Functionally, lysophosphatidylserine (LPS) lipase that mediates the hydrolysis of lysophosphatidylserine, a class of signaling lipids that regulates immunological and neurological processes. Represents a major lysophosphatidylserine lipase in the brain, thereby playing a key role in the central nervous system. Also able to hydrolyze oxidized phosphatidylserine; oxidized phosphatidylserine is produced in response to severe inflammatory stress and constitutes a proapoptotic 'eat me' signal. Also has monoacylglycerol (MAG) lipase activity: hydrolyzes 2-arachidonoylglycerol (2-AG), thereby acting as a regulator of endocannabinoid signaling pathways. Has a strong preference for very-long-chain lipid substrates; substrate specificity is likely due to improved catalysis and not improved substrate binding. The polypeptide is Lysophosphatidylserine lipase ABHD12 (Bos taurus (Bovine)).